The primary structure comprises 469 residues: Ubiquitin carboxyl-terminal hydrolase MINDY-1 (469 aa).

The interval 1–105 is disordered; it reads MEHHQPEHPA…RLQELPQSPR (105 aa). A compositionally biased stretch (basic and acidic residues) spans 23–44; sequence ENHKVLSEPKEHPQDKDAKEAD. Ser-103 carries the phosphoserine modification. Cys-137 serves as the catalytic Nucleophile. His-319 acts as the Proton acceptor in catalysis. Positions 388–428 are ubiquitin-binding domain (UBD); sequence QVDQDYLIALSLQQQQPPPQGTSGLSDLELAQQLQQEEYQQ. The tract at residues 401-469 is disordered; sequence QQQPPPQGTS…PKQESDCVLL (69 aa). The span at 415-448 shows a compositional bias: low complexity; that stretch reads LELAQQLQQEEYQQHQAAQAAPARAPSPQGRGAA. The residue at position 441 (Ser-441) is a Phosphoserine. A compositionally biased stretch (basic and acidic residues) spans 453–469; the sequence is AAERRQRPKQESDCVLL.

Belongs to the MINDY deubiquitinase family. FAM63 subfamily.

The enzyme catalyses Thiol-dependent hydrolysis of ester, thioester, amide, peptide and isopeptide bonds formed by the C-terminal Gly of ubiquitin (a 76-residue protein attached to proteins as an intracellular targeting signal).. Functionally, hydrolase that can specifically remove 'Lys-48'-linked conjugated ubiquitin from proteins. Has exodeubiquitinase activity and has a preference for long polyubiquitin chains. May play a regulatory role at the level of protein turnover. This is Ubiquitin carboxyl-terminal hydrolase MINDY-1 (MINDY1) from Bos taurus (Bovine).